The sequence spans 662 residues: DNA ligase (662 aa).

Residues 32–36 (DAEYD), 81–82 (SL), and E112 contribute to the NAD(+) site. The N6-AMP-lysine intermediate role is filled by K114. NAD(+) contacts are provided by R135, E170, K286, and K310. Positions 402, 405, 420, and 425 each coordinate Zn(2+). The BRCT domain occupies 583–662 (PKGGPLTGST…AELHAMLRGE (80 aa)).

This sequence belongs to the NAD-dependent DNA ligase family. LigA subfamily. Mg(2+) serves as cofactor. Mn(2+) is required as a cofactor.

The catalysed reaction is NAD(+) + (deoxyribonucleotide)n-3'-hydroxyl + 5'-phospho-(deoxyribonucleotide)m = (deoxyribonucleotide)n+m + AMP + beta-nicotinamide D-nucleotide.. Functionally, DNA ligase that catalyzes the formation of phosphodiester linkages between 5'-phosphoryl and 3'-hydroxyl groups in double-stranded DNA using NAD as a coenzyme and as the energy source for the reaction. It is essential for DNA replication and repair of damaged DNA. In Solibacter usitatus (strain Ellin6076), this protein is DNA ligase.